The chain runs to 209 residues: MRHQCIQIPFKVNLLNKYFISGNHLSQLGELSGYYCVKDIHQRMLQHPIGQRILNDKPRVTPQTFKIEELLKLDENTFGHQYGKFMKDRDFSSGERPIVKYIPDLELAYVYQRYKEIHDFIHVLLMYDVSVYDEIVVKWFEMAQLGLPSATLSAFVGSFKLNCQEKQKLMETLPQILKRAHKSEFIMNVYFEEHINTDITQLRKSLRLL.

Zn(2+) contacts are provided by His118, Asp119, His122, and Glu134.

Belongs to the COQ4 family. In terms of assembly, component of a multi-subunit COQ enzyme complex. The cofactor is Zn(2+).

Its subcellular location is the mitochondrion inner membrane. The catalysed reaction is a 4-hydroxy-3-methoxy-5-(all-trans-polyprenyl)benzoate + H(+) = a 2-methoxy-6-(all-trans-polyprenyl)phenol + CO2. Its pathway is cofactor biosynthesis; ubiquinone biosynthesis. Functionally, lyase that catalyzes the C1-decarboxylation of 4-hydroxy-3-methoxy-5-(all-trans-polyprenyl)benzoic acid into 2-methoxy-6-(all-trans-polyprenyl)phenol during ubiquinone biosynthesis. This Paramecium tetraurelia protein is Ubiquinone biosynthesis protein COQ4 homolog 2, mitochondrial.